A 121-amino-acid chain; its full sequence is UPF0102 protein BVU_1879 (121 aa).

It belongs to the UPF0102 family.

In Phocaeicola vulgatus (strain ATCC 8482 / DSM 1447 / JCM 5826 / CCUG 4940 / NBRC 14291 / NCTC 11154) (Bacteroides vulgatus), this protein is UPF0102 protein BVU_1879.